We begin with the raw amino-acid sequence, 252 residues long: Curing of [URE3] protein 1 (252 aa).

It localises to the nucleus. In terms of biological role, involved in the curing of prion [URE3]. Nuclear localization of this protein may suggest a role in transcription regulation, so it might exert an effect on [URE3] through known prion-curing chaperones or BTN2. The protein is Curing of [URE3] protein 1 (CUR1) of Saccharomyces cerevisiae (strain ATCC 204508 / S288c) (Baker's yeast).